The chain runs to 318 residues: Peroxisomal targeting signal 2 receptor (318 aa).

6 WD repeats span residues Asp60 to Asp91, Glu104 to Asp136, Gly148 to Asp179, Ala191 to Asp222, Gly235 to Asn266, and His279 to Asp310.

The protein belongs to the WD repeat peroxin-7 family. In terms of assembly, interacts with PEX5; interaction only takes place when PEX7 is associated with cargo proteins. Interacts with VWA8.

The protein resides in the cytoplasm. It localises to the cytosol. Its subcellular location is the peroxisome matrix. Its function is as follows. Receptor required for the peroxisomal import of proteins containing a C-terminal PTS2-type peroxisomal targeting signal. Specifically binds to cargo proteins containing a PTS2 peroxisomal targeting signal in the cytosol. Cargo protein-binding triggers interaction with PEX5 and formation of a ternary complex composed of PEX5 and PEX7 along with PTS2-containing cargo proteins, which is tranlocated into peroxisomes by passing through the PEX13-PEX14 docking complex. This is Peroxisomal targeting signal 2 receptor from Mus musculus (Mouse).